Here is a 651-residue protein sequence, read N- to C-terminus: Protein EXECUTER 2, chloroplastic (651 aa).

The transit peptide at 1–69 (MATTQPCLIG…KAPSLSCLRN (69 aa)) directs the protein to the chloroplast. One can recognise a UVR domain in the interval 103–138 (ESVVSLLKSQLEDAVEKEDFEEAVKLKQAISEATVD). The segment at 330–359 (DATEELVGEGTEETNSSDDEEEVEEEENDS) is disordered.

It localises to the plastid. It is found in the chloroplast. Functionally, together with EX1, enables higher plants to perceive singlet oxygen as a stress signal in plastid that activates a genetically determined nuclear stress response program which triggers a programmed cell death (PCD). This transfer of singlet oxygen-induced stress-related signals from the plastid to the nucleus that triggers genetically controlled PCD pathway is unique to photosynthetic eukaryotes and operates under mild stress conditions, impeding photosystem II (PSII) without causing photooxidative damage of the plant. The chain is Protein EXECUTER 2, chloroplastic from Arabidopsis thaliana (Mouse-ear cress).